The sequence spans 339 residues: MSYFPILFFFFLKRCPSYTEPQNLTGVSEFLLLGLSEDPELQPVLAGLFLSMYLVTVLGNLLIILAVSSDSHLHTPMYFFLSNLSLADIGFTSTTVPKMIVDMQTHSRVISYEGCLTQMSFFVLFACMDDMLLSVMAYDRFVAICHPLHYRIIMNPRLCGFLILLSFFISLLDSQLHNLIMLQLTCFKDVDISNFFCDPSQLLHLRCSDTFINEMVIYFMGAIFGCLPISGILFSYYKIVSPILRVPTSDGKYKAFSTCGSHLAVVCLFYGTGLVGYLSSAVLPSPRKSMVASVMYTVVTPMLNPFIYSLRNKDIQSALCRLHGRIIKSHHLHPFCYMG.

The Extracellular portion of the chain corresponds to 1–43; that stretch reads MSYFPILFFFFLKRCPSYTEPQNLTGVSEFLLLGLSEDPELQP. N-linked (GlcNAc...) asparagine glycosylation occurs at N23. Residues 44 to 64 traverse the membrane as a helical segment; the sequence is VLAGLFLSMYLVTVLGNLLII. Residues 65–72 are Cytoplasmic-facing; the sequence is LAVSSDSH. A helical membrane pass occupies residues 73–93; it reads LHTPMYFFLSNLSLADIGFTS. At 94–117 the chain is on the extracellular side; the sequence is TTVPKMIVDMQTHSRVISYEGCLT. Residues C115 and C207 are joined by a disulfide bond. Residues 118–138 form a helical membrane-spanning segment; sequence QMSFFVLFACMDDMLLSVMAY. At 139-157 the chain is on the cytoplasmic side; that stretch reads DRFVAICHPLHYRIIMNPR. Residues 158 to 178 form a helical membrane-spanning segment; the sequence is LCGFLILLSFFISLLDSQLHN. The Extracellular portion of the chain corresponds to 179 to 215; that stretch reads LIMLQLTCFKDVDISNFFCDPSQLLHLRCSDTFINEM. A helical transmembrane segment spans residues 216–235; that stretch reads VIYFMGAIFGCLPISGILFS. Residues 236–255 are Cytoplasmic-facing; that stretch reads YYKIVSPILRVPTSDGKYKA. The chain crosses the membrane as a helical span at residues 256-276; the sequence is FSTCGSHLAVVCLFYGTGLVG. Topologically, residues 277–289 are extracellular; the sequence is YLSSAVLPSPRKS. A helical membrane pass occupies residues 290-310; it reads MVASVMYTVVTPMLNPFIYSL. The Cytoplasmic segment spans residues 311–339; the sequence is RNKDIQSALCRLHGRIIKSHHLHPFCYMG.

Belongs to the G-protein coupled receptor 1 family.

It is found in the cell membrane. Odorant receptor. This Homo sapiens (Human) protein is Olfactory receptor 7E24 (OR7E24).